The chain runs to 395 residues: Axin-like protein 1 (395 aa).

Residues 4–132 (RSKTFSDRIL…TTTADVSNTW (129 aa)) enclose the RGS domain. Residues 190–230 (QETKNSSETEEEKKKERSADPYGSDGFAPPPQSTQTHTLRN) form a disordered region. Residues 194 to 208 (NSSETEEEKKKERSA) are compositionally biased toward basic and acidic residues. In terms of domain architecture, DIX spans 301–386 (EIQKLTVELR…RITAICRMCP (86 aa)).

As to quaternary structure, interacts with bar-1, dsh-2, gsk-3, and mig-5.

Functionally, works in parallel with pry-1 in negatively regulating bar-1 signaling in vulval precursor cells and Q neuroblasts. Shown to have a role in excretory cell development. The protein is Axin-like protein 1 (axl-1) of Caenorhabditis briggsae.